A 708-amino-acid polypeptide reads, in one-letter code: Wall-associated receptor kinase-like 14 (708 aa).

Residues 1 to 42 (MLRSIFDFNQRSTKMVMISHKLDLILVFIIVIGGSIFRRVSA) form the signal peptide. N-linked (GlcNAc...) asparagine glycans are attached at residues Asn43, Asn88, Asn101, Asn131, Asn158, Asn167, and Asn184. The Extracellular segment spans residues 43–285 (NFTVPCNGRC…WRHCRSNLIT (243 aa)). A helical transmembrane segment spans residues 286 to 306 (IVGGTVGGAFLLAALAFFFFC). Over 307 to 708 (KRRRSTPLRS…TNTLLGNIPR (402 aa)) the chain is Cytoplasmic. Residues 348–629 (FSEKQKLGIG…LEQIRLSGWI (282 aa)) enclose the Protein kinase domain. Residues 354-362 (LGIGAYGTV) and Lys376 each bind ATP. The Proton acceptor role is filled by Asp472. Disordered stretches follow at residues 636–659 (SPAGSLRSSDRGSERSVKQSSIGS) and 686–708 (VQDPWLSAQSSPSTNTLLGNIPR). A compositionally biased stretch (basic and acidic residues) spans 643-652 (SSDRGSERSV). The span at 692-708 (SAQSSPSTNTLLGNIPR) shows a compositional bias: polar residues.

This sequence belongs to the protein kinase superfamily. Ser/Thr protein kinase family.

Its subcellular location is the membrane. It catalyses the reaction L-seryl-[protein] + ATP = O-phospho-L-seryl-[protein] + ADP + H(+). It carries out the reaction L-threonyl-[protein] + ATP = O-phospho-L-threonyl-[protein] + ADP + H(+). Its function is as follows. Serine/threonine-protein kinase that may function as a signaling receptor of extracellular matrix component. This chain is Wall-associated receptor kinase-like 14 (WAKL14), found in Arabidopsis thaliana (Mouse-ear cress).